A 124-amino-acid polypeptide reads, in one-letter code: MSAVAEITETTTTEMPTPIVFTDSAAAKVADLIAEEGNPDLKLRVFVQGGGCSGFQYGFTFDEITNDDDTTMTKNGVSLLIDAMSYQYLVGAEIDYKEDLQGAQFVIKNPNASTTCGCGSSFSV.

Positions 52, 116, and 118 each coordinate iron-sulfur cluster.

The protein belongs to the HesB/IscA family. Homodimer. Iron-sulfur cluster is required as a cofactor.

In terms of biological role, required for insertion of 4Fe-4S clusters. This chain is Putative iron-sulfur cluster insertion protein ErpA, found in Delftia acidovorans (strain DSM 14801 / SPH-1).